The primary structure comprises 151 residues: Glutamate mutase sigma subunit 1 (151 aa).

A B12-binding domain is found at 7-140 (PRTVILGVIG…EMLREDLQLT (134 aa)). Adenosylcob(III)alamin-binding positions include 17–21 (SDAHV), His20, 65–67 (SSL), and 96–100 (NLAVG).

The protein belongs to the methylaspartate mutase GlmS subunit family. In terms of assembly, heterotetramer composed of 2 epsilon subunits (GlmE) and 2 sigma subunits (GlmS). GlmE exists as a homodimer and GlmS as a monomer. Adenosylcob(III)alamin is required as a cofactor.

It carries out the reaction (2S,3S)-3-methyl-L-aspartate = L-glutamate. Its pathway is amino-acid degradation; L-glutamate degradation via mesaconate pathway; acetate and pyruvate from L-glutamate: step 1/4. In terms of biological role, catalyzes the carbon skeleton rearrangement of L-glutamate to L-threo-3-methylaspartate ((2S,3S)-3-methylaspartate). This is Glutamate mutase sigma subunit 1 from Haloarcula marismortui (strain ATCC 43049 / DSM 3752 / JCM 8966 / VKM B-1809) (Halobacterium marismortui).